Consider the following 337-residue polypeptide: Putative transcription activator protein HfaB (337 aa).

A compositionally biased stretch (polar residues) spans 303–313; that stretch reads AYNNLGTNNAQ. Positions 303 to 337 are disordered; sequence AYNNLGTNNAQTRDDPSRWNARRDPDIRDAKRGRY. The span at 314–337 shows a compositional bias: basic and acidic residues; the sequence is TRDDPSRWNARRDPDIRDAKRGRY.

Its function is as follows. Required for the attachment of the holdfast to the cell. May be involved in the positive regulation of hfaC. The sequence is that of Putative transcription activator protein HfaB (hfaB) from Caulobacter vibrioides (strain ATCC 19089 / CIP 103742 / CB 15) (Caulobacter crescentus).